The sequence spans 512 residues: 2,3-bisphosphoglycerate-independent phosphoglycerate mutase (512 aa).

Mn(2+) is bound by residues Asp12 and Ser62. Residue Ser62 is the Phosphoserine intermediate of the active site. Substrate contacts are provided by residues His123, 153 to 154 (RD), Arg185, Arg191, 260 to 263 (RPDR), and Lys333. Residues Asp400, His404, Asp441, His442, and His460 each coordinate Mn(2+).

It belongs to the BPG-independent phosphoglycerate mutase family. As to quaternary structure, monomer. Requires Mn(2+) as cofactor.

The catalysed reaction is (2R)-2-phosphoglycerate = (2R)-3-phosphoglycerate. It participates in carbohydrate degradation; glycolysis; pyruvate from D-glyceraldehyde 3-phosphate: step 3/5. In terms of biological role, catalyzes the interconversion of 2-phosphoglycerate and 3-phosphoglycerate. The protein is 2,3-bisphosphoglycerate-independent phosphoglycerate mutase of Clostridium perfringens (strain ATCC 13124 / DSM 756 / JCM 1290 / NCIMB 6125 / NCTC 8237 / Type A).